A 186-amino-acid polypeptide reads, in one-letter code: Nicotinamide-nucleotide adenylyltransferase (186 aa).

This sequence belongs to the archaeal NMN adenylyltransferase family.

It localises to the cytoplasm. It catalyses the reaction beta-nicotinamide D-ribonucleotide + ATP + H(+) = diphosphate + NAD(+). The protein operates within cofactor biosynthesis; NAD(+) biosynthesis; NAD(+) from nicotinamide D-ribonucleotide: step 1/1. This is Nicotinamide-nucleotide adenylyltransferase from Pyrococcus abyssi (strain GE5 / Orsay).